The chain runs to 566 residues: Arginine--tRNA ligase (566 aa).

A 'HIGH' region motif is present at residues 121 to 131; the sequence is ANPNGPFHIGH.

This sequence belongs to the class-I aminoacyl-tRNA synthetase family.

Its subcellular location is the cytoplasm. The enzyme catalyses tRNA(Arg) + L-arginine + ATP = L-arginyl-tRNA(Arg) + AMP + diphosphate. The protein is Arginine--tRNA ligase of Methanococcus maripaludis (strain C5 / ATCC BAA-1333).